The primary structure comprises 260 residues: Imidazole glycerol phosphate synthase subunit HisF (260 aa).

Catalysis depends on residues aspartate 12 and aspartate 131.

It belongs to the HisA/HisF family. Heterodimer of HisH and HisF.

It is found in the cytoplasm. It catalyses the reaction 5-[(5-phospho-1-deoxy-D-ribulos-1-ylimino)methylamino]-1-(5-phospho-beta-D-ribosyl)imidazole-4-carboxamide + L-glutamine = D-erythro-1-(imidazol-4-yl)glycerol 3-phosphate + 5-amino-1-(5-phospho-beta-D-ribosyl)imidazole-4-carboxamide + L-glutamate + H(+). The protein operates within amino-acid biosynthesis; L-histidine biosynthesis; L-histidine from 5-phospho-alpha-D-ribose 1-diphosphate: step 5/9. In terms of biological role, IGPS catalyzes the conversion of PRFAR and glutamine to IGP, AICAR and glutamate. The HisF subunit catalyzes the cyclization activity that produces IGP and AICAR from PRFAR using the ammonia provided by the HisH subunit. The protein is Imidazole glycerol phosphate synthase subunit HisF of Corynebacterium jeikeium (strain K411).